The primary structure comprises 284 residues: Bifunctional protein FolD (284 aa).

NADP(+) contacts are provided by residues 166–168 (GAS) and isoleucine 232.

It belongs to the tetrahydrofolate dehydrogenase/cyclohydrolase family. As to quaternary structure, homodimer.

The enzyme catalyses (6R)-5,10-methylene-5,6,7,8-tetrahydrofolate + NADP(+) = (6R)-5,10-methenyltetrahydrofolate + NADPH. It carries out the reaction (6R)-5,10-methenyltetrahydrofolate + H2O = (6R)-10-formyltetrahydrofolate + H(+). It functions in the pathway one-carbon metabolism; tetrahydrofolate interconversion. Its function is as follows. Catalyzes the oxidation of 5,10-methylenetetrahydrofolate to 5,10-methenyltetrahydrofolate and then the hydrolysis of 5,10-methenyltetrahydrofolate to 10-formyltetrahydrofolate. The chain is Bifunctional protein FolD from Shewanella amazonensis (strain ATCC BAA-1098 / SB2B).